Here is a 443-residue protein sequence, read N- to C-terminus: MSKIIKVIGREIIDSRGYPTVEAEVHLLGGIIGRASSPSGISIGSREAHEVRDRDNSRFLGEGVTKAVKSINNKISKSLISKNAQKQKDIDQIMINLDGTKNKSNLGANAILAVSLANAKAASKIKNIPLYKHISEINNTPGIFSMPLPMINIINGGKHTNNNIDIQEFMIQPIGAKSIKQAIQMGSEIFHNLGKILNEKGMSTSIGDEGGYSPNLKSNSNAFVLIKEAVKRSKYHIGRDITFAIDCAASEFFEESTQSYYLKSENNFFSSYEFVLFLKKLTEEYPILSIEDGLHENDWEGFSMLTNYLGNKIQLVGDDLFTTNPKFLKYGIKKGIANSILIKPNQIGSLTETLEVIKIAKKYGYATIISHRSGETEDVTIADLSVGTSSGQIKTGSMSRSDRTAKYNRLIRIEEELGSNAIFHGKMEIKNQFIYSNNNLKNF.

Gln-167 is a (2R)-2-phosphoglycerate binding site. Glu-209 serves as the catalytic Proton donor. Mg(2+)-binding residues include Asp-246, Glu-291, and Asp-318. (2R)-2-phosphoglycerate-binding residues include Lys-343, Arg-372, Ser-373, and Lys-394. The active-site Proton acceptor is the Lys-343.

Belongs to the enolase family. Component of the RNA degradosome, a multiprotein complex involved in RNA processing and mRNA degradation. It depends on Mg(2+) as a cofactor.

It localises to the cytoplasm. The protein localises to the secreted. Its subcellular location is the cell surface. It carries out the reaction (2R)-2-phosphoglycerate = phosphoenolpyruvate + H2O. It participates in carbohydrate degradation; glycolysis; pyruvate from D-glyceraldehyde 3-phosphate: step 4/5. In terms of biological role, catalyzes the reversible conversion of 2-phosphoglycerate (2-PG) into phosphoenolpyruvate (PEP). It is essential for the degradation of carbohydrates via glycolysis. The polypeptide is Enolase (Wigglesworthia glossinidia brevipalpis).